The primary structure comprises 119 residues: Acidic phospholipase A2 natratoxin (119 aa).

Intrachain disulfides connect C11–C71, C26–C118, C28–C44, C43–C99, C50–C92, C60–C85, and C78–C90. The Ca(2+) site is built by Y27, G29, and G31. H47 is a catalytic residue. D48 provides a ligand contact to Ca(2+). D93 is a catalytic residue.

It belongs to the phospholipase A2 family. Group I subfamily. D49 sub-subfamily. Requires Ca(2+) as cofactor. In terms of tissue distribution, expressed by the venom gland.

Its subcellular location is the secreted. It carries out the reaction a 1,2-diacyl-sn-glycero-3-phosphocholine + H2O = a 1-acyl-sn-glycero-3-phosphocholine + a fatty acid + H(+). Snake venom phospholipase A2 (PLA2) that has an effectively inhibitory effect on A-type K(+) currents (Kv/KCN) in acutely dissociated rat dorsal root ganglion (DRG) neurons. This inhibitory effect is independent of its enzymatic activity. PLA2 catalyzes the calcium-dependent hydrolysis of the 2-acyl groups in 3-sn-phosphoglycerides. In Naja atra (Chinese cobra), this protein is Acidic phospholipase A2 natratoxin.